The chain runs to 300 residues: tRNA dimethylallyltransferase (300 aa).

11–18 (GPTAVGKS) is a binding site for ATP. 13-18 (TAVGKS) is a substrate binding site. The interval 35-38 (DSVQ) is interaction with substrate tRNA.

Belongs to the IPP transferase family. Monomer. Mg(2+) serves as cofactor.

It catalyses the reaction adenosine(37) in tRNA + dimethylallyl diphosphate = N(6)-dimethylallyladenosine(37) in tRNA + diphosphate. In terms of biological role, catalyzes the transfer of a dimethylallyl group onto the adenine at position 37 in tRNAs that read codons beginning with uridine, leading to the formation of N6-(dimethylallyl)adenosine (i(6)A). This Borrelia hermsii (strain HS1 / DAH) protein is tRNA dimethylallyltransferase.